A 575-amino-acid polypeptide reads, in one-letter code: Sodium/calcium exchanger NCL2 (575 aa).

The next 3 helical transmembrane spans lie at 69–89 (FLPC…YGFL), 112–132 (IVGG…LILV), and 146–166 (VLIG…LLWG). Asparagine 179 carries an N-linked (GlcNAc...) asparagine glycan. 2 helical membrane passes run 210-230 (IMAI…FKLH) and 237-257 (VLIG…YQVF). 2 consecutive EF-hand domains span residues 297–332 (PNVS…INFE) and 337–372 (NSNL…WLDE). Residue asparagine 298 is glycosylated (N-linked (GlcNAc...) asparagine). Ca(2+) is bound by residues aspartate 310, aspartate 312, aspartate 314, lysine 316, glutamate 321, aspartate 350, serine 352, asparagine 354, and glutamate 361. The next 5 helical transmembrane spans lie at 417–437 (WTCI…AASA), 457–477 (FISF…SAII), 494–514 (VYGG…ALVY), 522–542 (FSSE…FTSF), and 548–568 (LWTC…VYIL).

Belongs to the Ca(2+):cation antiporter (CaCA) (TC 2.A.19) family.

The protein resides in the cell membrane. In terms of biological role, may function as a sodium/calcium exchanger (NCX) and participate in the maintenance of calcium homeostasis. May play a role abiotic stress responses. The polypeptide is Sodium/calcium exchanger NCL2 (Oryza sativa subsp. japonica (Rice)).